Consider the following 321-residue polypeptide: Serine protease 52 (321 aa).

The first 27 residues, M1 to A27, serve as a signal peptide directing secretion. Residues I56 to A287 enclose the Peptidase S1 domain. A disulfide bridge links C81 with C97. Residues H96 and D142 each act as charge relay system in the active site. The N-linked (GlcNAc...) asparagine glycan is linked to N153. Disulfide bonds link C175/C242, C208/C221, and C232/C263. The active-site Charge relay system is S236. Residues A300–L320 form a helical membrane-spanning segment.

This sequence belongs to the peptidase S1 family.

It localises to the membrane. Its function is as follows. Probable serine protease. This is Serine protease 52 (Prss52) from Mus musculus (Mouse).